The chain runs to 77 residues: Conotoxin CaHr91 (77 aa).

The first 19 residues, 1 to 19 (MKLTCALIITVLFLSITAD), serve as a signal peptide directing secretion. Residues 20-43 (DSRGKQGYRALKSIAGMLNSKTVR) constitute a propeptide that is removed on maturation. 3 cysteine pairs are disulfide-bonded: cysteine 45–cysteine 60, cysteine 52–cysteine 65, and cysteine 59–cysteine 74.

The protein belongs to the conotoxin O1 superfamily. As to expression, expressed by the venom duct.

The protein resides in the secreted. This chain is Conotoxin CaHr91, found in Conus capitaneus (Captain cone).